A 306-amino-acid chain; its full sequence is Light-independent protochlorophyllide reductase iron-sulfur ATP-binding protein (306 aa).

Positions 1–31 (MREAAGLEARGLKSPPILKGQDGEGSLQVHQ) are disordered. Residues 50–55 (GIGKST) and Lys-79 contribute to the ATP site. Ser-54 contacts Mg(2+). Residues Cys-135 and Cys-169 each coordinate [4Fe-4S] cluster. Position 220-221 (220-221 (NR)) interacts with ATP.

This sequence belongs to the NifH/BchL/ChlL family. As to quaternary structure, homodimer. Protochlorophyllide reductase is composed of three subunits; BchL, BchN and BchB. The cofactor is [4Fe-4S] cluster.

The enzyme catalyses chlorophyllide a + oxidized 2[4Fe-4S]-[ferredoxin] + 2 ADP + 2 phosphate = protochlorophyllide a + reduced 2[4Fe-4S]-[ferredoxin] + 2 ATP + 2 H2O. The protein operates within porphyrin-containing compound metabolism; bacteriochlorophyll biosynthesis (light-independent). Functionally, component of the dark-operative protochlorophyllide reductase (DPOR) that uses Mg-ATP and reduced ferredoxin to reduce ring D of protochlorophyllide (Pchlide) to form chlorophyllide a (Chlide). This reaction is light-independent. The L component serves as a unique electron donor to the NB-component of the complex, and binds Mg-ATP. This chain is Light-independent protochlorophyllide reductase iron-sulfur ATP-binding protein, found in Jannaschia sp. (strain CCS1).